We begin with the raw amino-acid sequence, 478 residues long: ATP-dependent RNA helicase DDX19A (478 aa).

Residue Ala-2 is modified to N-acetylalanine. The tract at residues 2 to 299 is N-terminal lobe; sequence ATDSWALAVD…DPNIIKLKRE (298 aa). Lys-26 participates in a covalent cross-link: Glycyl lysine isopeptide (Lys-Gly) (interchain with G-Cter in SUMO1); alternate. Lys-26 participates in a covalent cross-link: Glycyl lysine isopeptide (Lys-Gly) (interchain with G-Cter in SUMO2); alternate. The segment at 31 to 55 is disordered; sequence KPDTNGVIKTNATPEKTDEEEKEDR. An N-terminal helix region spans residues 54–67; sequence DRAAQSLLNKLIRS. Positions 91–119 match the Q motif motif; that stretch reads KSFEELRLKPQLLQGVYAMGFNRPSKIQE. ATP is bound by residues Gln-118 and 137–144; that span reads SQSGTGKT. The Helicase ATP-binding domain occupies 124 to 294; sequence MMLAEPPQNL…QKVVPDPNII (171 aa). The short motif at 241–244 is the DEAD box element; that stretch reads DEAD. Residues 300-478 form a C-terminal lobe region; the sequence is EETLDTIKQY…DLDEIEKIAN (179 aa). Positions 305–473 constitute a Helicase C-terminal domain; the sequence is TIKQYYVLCN…RLDTDDLDEI (169 aa). 2 residues coordinate ATP: Arg-428 and Arg-431.

Belongs to the DEAD box helicase family. DDX19/DBP5 subfamily.

The protein resides in the cytoplasm. The protein localises to the nucleus. Its subcellular location is the nucleoplasm. It carries out the reaction ATP + H2O = ADP + phosphate + H(+). Its function is as follows. ATP-dependent RNA helicase involved in mRNA export from the nucleus. Rather than unwinding RNA duplexes, DDX19 functions as a remodeler of ribonucleoprotein particles, whereby proteins bound to nuclear mRNA are dissociated and replaced by cytoplasmic mRNA binding proteins. This Bos taurus (Bovine) protein is ATP-dependent RNA helicase DDX19A (DDX19A).